Consider the following 253-residue polypeptide: MLKTRIIPCLDVADGRVVKGVNFVDLRDAGDPVEAARAYDAAGADELCFLDIHATHENRGTMYDLVTRTAEQCFMPLTVGGGVRTHQDVRALLLAGADKVSFNSAAVADPTVVAEAADRFGSQCIVVAIDAKTVAPGRWEIFTHGGRRATGIDAVEFACDVASRGAGEILLTSMDRDGTRAGFNLPLTRAISEAVPIPVIASGGVGTLDHLVEGVTEGGASAVLAASIFHFGEFTIGEAKAHMATAGIPVRLA.

Active-site residues include aspartate 11 and aspartate 130.

The protein belongs to the HisA/HisF family. Heterodimer of HisH and HisF.

Its subcellular location is the cytoplasm. It carries out the reaction 5-[(5-phospho-1-deoxy-D-ribulos-1-ylimino)methylamino]-1-(5-phospho-beta-D-ribosyl)imidazole-4-carboxamide + L-glutamine = D-erythro-1-(imidazol-4-yl)glycerol 3-phosphate + 5-amino-1-(5-phospho-beta-D-ribosyl)imidazole-4-carboxamide + L-glutamate + H(+). The protein operates within amino-acid biosynthesis; L-histidine biosynthesis; L-histidine from 5-phospho-alpha-D-ribose 1-diphosphate: step 5/9. Its function is as follows. IGPS catalyzes the conversion of PRFAR and glutamine to IGP, AICAR and glutamate. The HisF subunit catalyzes the cyclization activity that produces IGP and AICAR from PRFAR using the ammonia provided by the HisH subunit. The polypeptide is Imidazole glycerol phosphate synthase subunit HisF (Cereibacter sphaeroides (strain KD131 / KCTC 12085) (Rhodobacter sphaeroides)).